Consider the following 521-residue polypeptide: Acidic amino acid decarboxylase GADL1 (521 aa).

Over residues 1 to 12 (MSLLPDRERAPD) the composition is skewed to basic and acidic residues. The disordered stretch occupies residues 1–20 (MSLLPDRERAPDGDISPQEM). At lysine 333 the chain carries N6-(pyridoxal phosphate)lysine.

The protein belongs to the group II decarboxylase family. Homodimer. Requires pyridoxal 5'-phosphate as cofactor. As to expression, expressed at highest levels in skeletal muscles. Also detected heart, spleen and rumen.

It catalyses the reaction L-aspartate + H(+) = beta-alanine + CO2. It carries out the reaction 3-sulfino-L-alanine + H(+) = hypotaurine + CO2. The catalysed reaction is L-cysteate + H(+) = taurine + CO2. Catalyzes the decarboxylation of L-aspartate, 3-sulfino-L-alanine (cysteine sulfinic acid), and L-cysteate to beta-alanine, hypotaurine and taurine, respectively. The preferred substrate is L-aspartate. Does not exhibit any decarboxylation activity toward glutamate. The chain is Acidic amino acid decarboxylase GADL1 (GADL1) from Bos taurus (Bovine).